The chain runs to 428 residues: L-glutamyl-[BtrI acyl-carrier protein] decarboxylase (428 aa).

K49 is modified (N6-(pyridoxal phosphate)lysine). Pyridoxal 5'-phosphate-binding positions include G228, 269–272 (ESGR), and Y375. 2 residues coordinate substrate: R272 and Y375.

Belongs to the Orn/Lys/Arg decarboxylase class-II family. Homodimer. The cofactor is pyridoxal 5'-phosphate.

The catalysed reaction is gamma-L-glutamyl-[BtrI ACP] + H(+) = 4-aminobutanoyl-[BtrI ACP] + CO2. It functions in the pathway antibiotic biosynthesis; butirosin biosynthesis. Functionally, pyridoxal phosphate-dependent decarboxylase that catalyzes 1 step in the biosynthesis of the side chain of the aminoglycoside antibiotics in the biosynthetic pathway of butirosin. Able to decarboxylate L-ornithine, L-arginine, L-lysine, but not L-glutamate or any D-amino acids. Has low activity with substrates not bound to an acyl-carrier protein. The sequence is that of L-glutamyl-[BtrI acyl-carrier protein] decarboxylase (btrK) from Niallia circulans (Bacillus circulans).